A 1203-amino-acid polypeptide reads, in one-letter code: DNA-directed RNA polymerase subunit beta' (1203 aa).

Positions 60, 62, 75, and 78 each coordinate Zn(2+). Mg(2+) is bound by residues D449, D451, and D453. Zn(2+)-binding residues include C818, C892, C899, and C902.

It belongs to the RNA polymerase beta' chain family. In terms of assembly, the RNAP catalytic core consists of 2 alpha, 1 beta, 1 beta' and 1 omega subunit. When a sigma factor is associated with the core the holoenzyme is formed, which can initiate transcription. The cofactor is Mg(2+). Zn(2+) serves as cofactor.

The enzyme catalyses RNA(n) + a ribonucleoside 5'-triphosphate = RNA(n+1) + diphosphate. In terms of biological role, DNA-dependent RNA polymerase catalyzes the transcription of DNA into RNA using the four ribonucleoside triphosphates as substrates. The protein is DNA-directed RNA polymerase subunit beta' of Bacillus cereus (strain ATCC 14579 / DSM 31 / CCUG 7414 / JCM 2152 / NBRC 15305 / NCIMB 9373 / NCTC 2599 / NRRL B-3711).